Consider the following 180-residue polypeptide: Superoxide dismutase [Cu-Zn] (180 aa).

Positions 1-19 (MFMNLLSQVSNAIFPQVEA) are cleaved as a signal peptide. The Cu cation site is built by His68, His70, and His85. Cys79 and Cys171 form a disulfide bridge. Positions 85, 93, 102, and 105 each coordinate Zn(2+). His142 serves as a coordination point for Cu cation.

Belongs to the Cu-Zn superoxide dismutase family. Homodimer. The cofactor is Cu cation. Zn(2+) is required as a cofactor.

The protein resides in the cytoplasm. It catalyses the reaction 2 superoxide + 2 H(+) = H2O2 + O2. Destroys radicals which are normally produced within the cells and which are toxic to biological systems. Required for normal brood size. May be involved in regulating mpk-1 phosphorylation downstream of phosphatase ptp-2 during oocyte maturation. The sequence is that of Superoxide dismutase [Cu-Zn] from Caenorhabditis briggsae.